A 94-amino-acid chain; its full sequence is Co-chaperonin GroES (94 aa).

Belongs to the GroES chaperonin family. Heptamer of 7 subunits arranged in a ring. Interacts with the chaperonin GroEL.

It localises to the cytoplasm. Together with the chaperonin GroEL, plays an essential role in assisting protein folding. The GroEL-GroES system forms a nano-cage that allows encapsulation of the non-native substrate proteins and provides a physical environment optimized to promote and accelerate protein folding. GroES binds to the apical surface of the GroEL ring, thereby capping the opening of the GroEL channel. This is Co-chaperonin GroES from Staphylococcus epidermidis.